The following is a 388-amino-acid chain: Xylose isomerase (388 aa).

Active-site residues include H54 and D57. E181, E217, H220, D245, D255, D257, and D287 together coordinate Mg(2+).

The protein belongs to the xylose isomerase family. As to quaternary structure, homotetramer. Mg(2+) serves as cofactor.

It is found in the cytoplasm. The enzyme catalyses alpha-D-xylose = alpha-D-xylulofuranose. This is Xylose isomerase from Streptomyces avermitilis (strain ATCC 31267 / DSM 46492 / JCM 5070 / NBRC 14893 / NCIMB 12804 / NRRL 8165 / MA-4680).